A 415-amino-acid polypeptide reads, in one-letter code: Camphor 5-monooxygenase (415 aa).

A heme-binding site is contributed by Cys-358.

This sequence belongs to the cytochrome P450 family. Heme is required as a cofactor.

It is found in the cytoplasm. It carries out the reaction 2 reduced [2Fe-2S]-[putidaredoxin] + (1R,4R)-camphor + O2 + 2 H(+) = (1R,4R,5R)-5-hydroxycamphor + 2 oxidized [2Fe-2S]-[putidaredoxin] + H2O. The protein operates within terpene metabolism; (R)-camphor degradation. In terms of biological role, involved in a camphor oxidation system. This Pseudomonas putida (Arthrobacter siderocapsulatus) protein is Camphor 5-monooxygenase (camC).